A 725-amino-acid chain; its full sequence is Palmitoyltransferase AKR1 (725 aa).

The Cytoplasmic portion of the chain corresponds to 1–303 (MGTIAMASIN…LKDKRSFVTR (303 aa)). ANK repeat units lie at residues 84-113 (EGIT…EINR), 118-147 (SIAT…DPLV), 151-180 (QGYN…PVDV), 184-213 (FGHT…SVHA), and 217-246 (QGFT…DRFA). A helical membrane pass occupies residues 304–324 (FLFFWPFVLVWAMLVAMSSAP). At 325-326 (VY) the chain is on the lumenal side. The helical transmembrane segment at 327–347 (IGVPLGIAAVYAIQWVAQQVL) threads the bilayer. Topologically, residues 348–364 (EYAPSDMRHFHKTPWLT) are cytoplasmic. A helical transmembrane segment spans residues 365 to 385 (GIFAATLFWTGVNWLTTVLFA). Residues 386 to 397 (TTLGAPEGKGHG) are Lumenal-facing. Residues 398-418 (ILNFLFALFFGFTVYFYIASM) traverse the membrane as a helical segment. The Cytoplasmic segment spans residues 419–495 (RYDPGFVPKM…NCVGINNHRH (77 aa)). A DHHC domain is found at 451 to 501 (NFCVTCMIQTPLRSKHCRRCQRCVAKHDHHCPWVYNCVGINNHRHFFFYLI). Residue Cys-481 is the S-palmitoyl cysteine intermediate of the active site. The chain crosses the membrane as a helical span at residues 496-516 (FFFYLISLTMGIVSYDFLLYY). At 517–547 (YFDTVSKNASETCNVLSPTLCKYINADSYTS) the chain is on the lumenal side. Residues 548 to 568 (ILAIWITMQLLWVTMLLFTQF) traverse the membrane as a helical segment. Residues 569–725 (IQVARAMTTY…YEAVGTEDVV (157 aa)) are Cytoplasmic-facing.

It belongs to the DHHC palmitoyltransferase family. AKR/ZDHHC17 subfamily.

It localises to the early endosome membrane. Its subcellular location is the golgi apparatus membrane. It carries out the reaction L-cysteinyl-[protein] + hexadecanoyl-CoA = S-hexadecanoyl-L-cysteinyl-[protein] + CoA. Its function is as follows. Palmitoyltransferase specific for casein kinase 1. In Gibberella zeae (strain ATCC MYA-4620 / CBS 123657 / FGSC 9075 / NRRL 31084 / PH-1) (Wheat head blight fungus), this protein is Palmitoyltransferase AKR1 (AKR1).